The chain runs to 491 residues: Probable glycine dehydrogenase (decarboxylating) subunit 2 (491 aa).

Lys273 carries the N6-(pyridoxal phosphate)lysine modification.

The protein belongs to the GcvP family. C-terminal subunit subfamily. In terms of assembly, the glycine cleavage system is composed of four proteins: P, T, L and H. In this organism, the P 'protein' is a heterodimer of two subunits. The cofactor is pyridoxal 5'-phosphate.

The catalysed reaction is N(6)-[(R)-lipoyl]-L-lysyl-[glycine-cleavage complex H protein] + glycine + H(+) = N(6)-[(R)-S(8)-aminomethyldihydrolipoyl]-L-lysyl-[glycine-cleavage complex H protein] + CO2. In terms of biological role, the glycine cleavage system catalyzes the degradation of glycine. The P protein binds the alpha-amino group of glycine through its pyridoxal phosphate cofactor; CO(2) is released and the remaining methylamine moiety is then transferred to the lipoamide cofactor of the H protein. The protein is Probable glycine dehydrogenase (decarboxylating) subunit 2 of Bacillus cereus (strain G9842).